Reading from the N-terminus, the 344-residue chain is Pyruvate dehydrogenase E1 component subunit alpha (344 aa).

Pyruvate contacts are provided by His55, Tyr81, Arg82, Ala130, Ile132, Asp168, Gly169, and Asn197. The thiamine diphosphate site is built by Tyr81, Arg82, Ala130, Ile132, Asp168, Gly169, Asn197, and His266. Asp168 serves as a coordination point for Mg(2+). Asn197 serves as a coordination point for Mg(2+).

In terms of assembly, heterodimer of an alpha and a beta chain. Thiamine diphosphate serves as cofactor. The cofactor is Mg(2+).

Its subcellular location is the plastid. The protein localises to the chloroplast. It carries out the reaction N(6)-[(R)-lipoyl]-L-lysyl-[protein] + pyruvate + H(+) = N(6)-[(R)-S(8)-acetyldihydrolipoyl]-L-lysyl-[protein] + CO2. Functionally, the pyruvate dehydrogenase complex catalyzes the overall conversion of pyruvate to acetyl-CoA and CO(2). It contains multiple copies of three enzymatic components: pyruvate dehydrogenase (E1), dihydrolipoamide acetyltransferase (E2) and lipoamide dehydrogenase (E3). In Porphyra purpurea (Red seaweed), this protein is Pyruvate dehydrogenase E1 component subunit alpha (pdhA).